Consider the following 563-residue polypeptide: Arginine--tRNA ligase (563 aa).

Residues 121–131 carry the 'HIGH' region motif; that stretch reads PNIAKPFSIGH.

The protein belongs to the class-I aminoacyl-tRNA synthetase family. In terms of assembly, monomer.

Its subcellular location is the cytoplasm. The enzyme catalyses tRNA(Arg) + L-arginine + ATP = L-arginyl-tRNA(Arg) + AMP + diphosphate. This Streptococcus pneumoniae (strain P1031) protein is Arginine--tRNA ligase.